The primary structure comprises 341 residues: N-acetyl-gamma-glutamyl-phosphate reductase 2 (341 aa).

C146 is an active-site residue.

It belongs to the NAGSA dehydrogenase family. Type 1 subfamily.

The protein resides in the cytoplasm. It carries out the reaction N-acetyl-L-glutamate 5-semialdehyde + phosphate + NADP(+) = N-acetyl-L-glutamyl 5-phosphate + NADPH + H(+). It functions in the pathway amino-acid biosynthesis; L-arginine biosynthesis; N(2)-acetyl-L-ornithine from L-glutamate: step 3/4. Functionally, catalyzes the NADPH-dependent reduction of N-acetyl-5-glutamyl phosphate to yield N-acetyl-L-glutamate 5-semialdehyde. This chain is N-acetyl-gamma-glutamyl-phosphate reductase 2, found in Lactiplantibacillus plantarum (strain ATCC BAA-793 / NCIMB 8826 / WCFS1) (Lactobacillus plantarum).